Reading from the N-terminus, the 383-residue chain is 3-dehydroquinate synthase (383 aa).

Residues 81-86, 115-119, 139-140, Lys-152, and Lys-161 contribute to the NAD(+) site; these read EGEVSK, GVVGD, and TS. Zn(2+) is bound by residues Glu-194, His-256, and His-274.

The protein belongs to the sugar phosphate cyclases superfamily. Dehydroquinate synthase family. Co(2+) is required as a cofactor. It depends on Zn(2+) as a cofactor. Requires NAD(+) as cofactor.

Its subcellular location is the cytoplasm. The catalysed reaction is 7-phospho-2-dehydro-3-deoxy-D-arabino-heptonate = 3-dehydroquinate + phosphate. It functions in the pathway metabolic intermediate biosynthesis; chorismate biosynthesis; chorismate from D-erythrose 4-phosphate and phosphoenolpyruvate: step 2/7. Its function is as follows. Catalyzes the conversion of 3-deoxy-D-arabino-heptulosonate 7-phosphate (DAHP) to dehydroquinate (DHQ). The chain is 3-dehydroquinate synthase from Nitrobacter winogradskyi (strain ATCC 25391 / DSM 10237 / CIP 104748 / NCIMB 11846 / Nb-255).